Consider the following 873-residue polypeptide: Calmodulin-dependent glutamylase SidJ (873 aa).

The interval 16-90 is disordered; the sequence is QSEDNPSETA…TTSTTKQKGP (75 aa). Positions 22-58 are enriched in polar residues; sequence SETAVETTDVSTKIKTTDTTQEESSVKTKTVVPTQPG. Residues Asp-542 and Asp-545 each contribute to the Mg(2+) site. A disordered region spans residues 851 to 873; sequence NLSEKSDIDSEKPESERTTDKRL.

As to quaternary structure, interacts with host calmodulin/CALM1; this interaction is required for glutamylase activity. It depends on Mg(2+) as a cofactor.

The catalysed reaction is L-glutamyl-[protein] + L-glutamate + ATP = gamma-L-glutamyl-L-glutamyl-[protein] + ADP + phosphate + H(+). It carries out the reaction (L-glutamyl)(n)-gamma-L-glutamyl-L-glutamyl-[protein] + L-glutamate + ATP = (L-glutamyl)(n+1)-gamma-L-glutamyl-L-glutamyl-[protein] + ADP + phosphate + H(+). Its activity is regulated as follows. Glytamylation catalyzed by SidJ requires host calmodulin and can be regulated by intracellular changes in Ca2+ concentrations. Also requires ATP. Functionally, glutamylase that mediates the covalent attachment of glutamate moieties to SdeA on one of the catalytic residues that is required for its mono-ADP-ribosyltransferase activity. In turn, inhibits SdeA ubiquitinating activity. Also glutamylates related SdeB, SdeC and SidE. Glutamylase activity only occurs in the host since it requires host calmodulin. May also reverse the SdeA-mediated substrate ubiquitination by cleaving the phosphodiester bond that links phosphoribosylated ubiquitin to protein substrates via its deubiquitinase activity. This Legionella pneumophila subsp. pneumophila (strain Philadelphia 1 / ATCC 33152 / DSM 7513) protein is Calmodulin-dependent glutamylase SidJ.